The primary structure comprises 223 residues: Cytidylate kinase (223 aa).

12 to 20 (GPSGVGKGT) serves as a coordination point for ATP.

The protein belongs to the cytidylate kinase family. Type 1 subfamily.

The protein localises to the cytoplasm. The catalysed reaction is CMP + ATP = CDP + ADP. It carries out the reaction dCMP + ATP = dCDP + ADP. The polypeptide is Cytidylate kinase (Xylella fastidiosa (strain M23)).